Reading from the N-terminus, the 1523-residue chain is Rho GTPase-activating protein gacHH (1523 aa).

3 Kelch repeats span residues 30–76 (DIVI…YGHS), 83–133 (KMFV…LIYD), and 135–184 (YILI…DISP). Composition is skewed to polar residues over residues 161 to 173 (NSWTKPSSNSSTG) and 184 to 194 (PRSSTTTPTHQ). Residues 161 to 256 (NSWTKPSSNS…GGSPMTTPPT (96 aa)) are disordered. Over residues 195–211 (SVNGSNSNSSSSSRVRS) the composition is skewed to low complexity. Positions 212 to 221 (ATISSHNNSP) are enriched in polar residues. The span at 227–244 (NNNNNNNNNSNNSNNSNN) shows a compositional bias: low complexity. 3 Kelch repeats span residues 335 to 384 (KAFI…AIGS), 386 to 441 (LFIF…PISS), and 443 to 496 (ILII…PITS). Disordered stretches follow at residues 510–569 (LPHL…DNIN), 609–631 (QSIDRNGGSGGGSGGGNGVVSND), and 647–671 (NKNNNNNNNNNSGGSNLSISSNSGS). The span at 615 to 626 (GGSGGGSGGGNG) shows a compositional bias: gly residues. Residues 690 to 729 (CIKKYNSLKDSYLELKQKYQEEREKRLELEKELERYRLSS) are a coiled coil. The tract at residues 748 to 786 (NINSNNSTTTTTTTTTTTTTPIPLSTSNNNNNNNNNSTL) is disordered. The stretch at 812-840 (YEKRVKWKENTEKEANQQLEVIKSKIDLF) forms a coiled coil. 5 disordered regions span residues 861–881 (SENINGDHNQQQQQQQQQNPQ), 905–927 (LTPRKSRENSVHHSRSVSNPIPL), 963–991 (TPQKPPQQPQQQQQQQPPQENGKEPSKST), 1006–1096 (SGHF…RLGK), and 1143–1194 (NGAN…SERI). Residues 870 to 881 (QQQQQQQQQNPQ) are compositionally biased toward low complexity. Residues 905-915 (LTPRKSRENSV) show a composition bias toward basic and acidic residues. Composition is skewed to low complexity over residues 971-981 (PQQQQQQQPPQ), 1012-1030 (SSSNESSNSEETTPTFSNN), 1043-1079 (QHQQQTNIGSNSISNINTSNSTTSLSSSVSSTSLQTQ), and 1143-1153 (NGANNLGGLVL). A coiled-coil region spans residues 1151 to 1228 (LVLTSDKEKE…KKHKKIKGLF (78 aa)). A compositionally biased stretch (basic and acidic residues) spans 1155 to 1194 (SDKEKEKLEKEREKSERIEREKQEKEREKLEKEREKSERI). The Rho-GAP domain occupies 1233–1411 (SNKESLPFRR…TFIEDFHYIF (179 aa)). The tract at residues 1425 to 1482 (DDDYDSSSFGSNNTPSSHSPHSSSPTLNPAVTTTTTTTTTTNTTTTTNTTTTPTSATI) is disordered. The span at 1430–1476 (SSSFGSNNTPSSHSPHSSSPTLNPAVTTTTTTTTTTNTTTTTNTTTT) shows a compositional bias: low complexity.

It is found in the cytoplasm. In terms of biological role, rho GTPase-activating protein involved in the signal transduction pathway. This is Rho GTPase-activating protein gacHH (gacHH) from Dictyostelium discoideum (Social amoeba).